A 525-amino-acid chain; its full sequence is uncharacterized protein (525 aa).

The first 21 residues, Met1 to Ala21, serve as a signal peptide directing secretion. The Extracellular segment spans residues Ala22 to Arg448. A disordered region spans residues Lys242–Thr264. A helical membrane pass occupies residues Ile449 to Tyr469. At Arg470–Glu525 the chain is on the cytoplasmic side.

It localises to the membrane. This is an uncharacterized protein from Saccharomyces cerevisiae (strain YJM789) (Baker's yeast).